A 460-amino-acid chain; its full sequence is GTPase Der (460 aa).

EngA-type G domains follow at residues 4–174 (PQVA…PRRE) and 184–361 (PKIA…AERS). Residues 10-17 (GRPNVGKS), 57-61 (DTGGL), 126-129 (NKAE), 190-197 (GRPNVGKS), 237-241 (DTAGI), and 302-305 (NKWD) each bind GTP. Residues 362-446 (RRIPTAELNQ…PIELVFRERE (85 aa)) form the KH-like domain.

The protein belongs to the TRAFAC class TrmE-Era-EngA-EngB-Septin-like GTPase superfamily. EngA (Der) GTPase family. In terms of assembly, associates with the 50S ribosomal subunit.

GTPase that plays an essential role in the late steps of ribosome biogenesis. The chain is GTPase Der from Thermomicrobium roseum (strain ATCC 27502 / DSM 5159 / P-2).